Consider the following 394-residue polypeptide: Keratin, type I cuticular Ha4 (394 aa).

Residues 1–56 (MSYSCCLPSLGCRTSCSSRPCVPPSCHGYTLPGACNIPANVSNCNWFCEGSFNGSE) are head. The IF rod domain maps to 56 to 367 (EKETMQFLND…SLLESEDCKL (312 aa)). A coil 1A region spans residues 57-91 (KETMQFLNDRLASYLEKVRQLERDNAELEKLIQER). Residues 92–102 (SQQQEPLLCPS) are linker 1. A coil 1B region spans residues 103–203 (YQSYFKTIEE…HEEEVNTLRS (101 aa)). The tract at residues 204-219 (QLGDRLNVEVDTAPTV) is linker 12. The segment at 220-363 (DLNQVLNETR…NTYRSLLESE (144 aa)) is coil 2. Residues 364 to 394 (DCKLPCNPCATTNASGNSCGPCGTSQKGCCN) form a tail region.

It belongs to the intermediate filament family. As to expression, expressed in the hair follicles.

The sequence is that of Keratin, type I cuticular Ha4 (KRT34) from Homo sapiens (Human).